A 276-amino-acid polypeptide reads, in one-letter code: Alpha N-terminal protein methyltransferase 1 (276 aa).

S-adenosyl-L-methionine-binding positions include glycine 96, arginine 101, 118 to 120 (EPV), 149 to 150 (LQ), and glutamine 165.

The protein belongs to the methyltransferase superfamily. NTM1 family.

It carries out the reaction N-terminal L-alanyl-L-prolyl-L-lysyl-[protein] + 3 S-adenosyl-L-methionine = N-terminal N,N,N-trimethyl-L-alanyl-L-prolyl-L-lysyl-[protein] + 3 S-adenosyl-L-homocysteine + 3 H(+). It catalyses the reaction N-terminal L-seryl-L-prolyl-L-lysyl-[protein] + 3 S-adenosyl-L-methionine = N-terminal N,N,N-trimethyl-L-seryl-L-prolyl-L-lysyl-[protein] + 3 S-adenosyl-L-homocysteine + 3 H(+). The catalysed reaction is N-terminal L-prolyl-L-prolyl-L-lysyl-[protein] + 2 S-adenosyl-L-methionine = N-terminal N,N-dimethyl-L-prolyl-L-prolyl-L-lysyl-[protein] + 2 S-adenosyl-L-homocysteine + 2 H(+). Functionally, alpha-N-methyltransferase that methylates the N-terminus of target proteins containing the N-terminal motif [Ala/Pro/Ser]-Pro-Lys when the initiator Met is cleaved. Specifically catalyzes mono-, di- or tri-methylation of exposed alpha-amino group of Ala or Ser residue in the [Ala/Ser]-Pro-Lys motif and mono- or di-methylation of Pro in the Pro-Pro-Lys motif. The protein is Alpha N-terminal protein methyltransferase 1 of Arabidopsis thaliana (Mouse-ear cress).